A 319-amino-acid chain; its full sequence is Peroxidase 13 (319 aa).

An N-terminal signal peptide occupies residues methionine 1–alanine 22. 4 cysteine pairs are disulfide-bonded: cysteine 33–cysteine 111, cysteine 66–cysteine 71, cysteine 117–cysteine 315, and cysteine 196–cysteine 222. Residue histidine 64 is the Proton acceptor of the active site. Residues aspartate 65, valine 68, glycine 70, aspartate 72, and serine 74 each contribute to the Ca(2+) site. Substrate is bound at residue proline 158. Histidine 189 is a binding site for heme b. Residue threonine 190 coordinates Ca(2+). 3 residues coordinate Ca(2+): aspartate 235, serine 238, and aspartate 243. An N-linked (GlcNAc...) asparagine glycan is attached at asparagine 280.

Belongs to the peroxidase family. Classical plant (class III) peroxidase subfamily. Heme b serves as cofactor. Requires Ca(2+) as cofactor.

It is found in the secreted. It carries out the reaction 2 a phenolic donor + H2O2 = 2 a phenolic radical donor + 2 H2O. Functionally, removal of H(2)O(2), oxidation of toxic reductants, biosynthesis and degradation of lignin, suberization, auxin catabolism, response to environmental stresses such as wounding, pathogen attack and oxidative stress. These functions might be dependent on each isozyme/isoform in each plant tissue. This Arabidopsis thaliana (Mouse-ear cress) protein is Peroxidase 13 (PER13).